We begin with the raw amino-acid sequence, 774 residues long: E3 ubiquitin-protein ligase UHRF1 (774 aa).

One can recognise a Ubiquitin-like domain in the interval 1-78 (MWIQVRTMDG…IQLLVRQSLA (78 aa)). Phosphoserine is present on residues S76, S91, S93, S95, and S161. The disordered stretch occupies residues 83–120 (TKERDSELSDSDSGYGVGHSESDKSSTHGEGTADGDDK). 2 tudor-like regions span residues 129 to 205 (GLYK…ARAR) and 212 to 280 (DLEV…IELP). K276 is covalently cross-linked (Glycyl lysine isopeptide (Lys-Gly) (interchain with G-Cter in SUMO2)). S284 carries the post-translational modification Phosphoserine. The tract at residues 293-298 (RKSGPS) is linker. S295 is subject to Phosphoserine; by PKA. Residues 296–363 (GPSCQYCKDD…EWYCPSCRTD (68 aa)) form a PHD-type zinc finger. 2 histone H3R2me0 binding regions span residues 330-334 (CDECD) and 350-352 (PPE). Phosphoserine is present on S365. K382 is covalently cross-linked (Glycyl lysine isopeptide (Lys-Gly) (interchain with G-Cter in SUMO2)). The segment at 382 to 605 (KMASATSSSR…QLGLTMQYPE (224 aa)) is methyl-CpG binding and interaction with HDAC1. N6-acetyllysine is present on K396. Positions 416–578 (GPIPGVPVGT…FIVWRYLLRR (163 aa)) constitute a YDG domain. Residues 442-443 (HV) are required to promote base flipping. DNA contacts are provided by residues 460 to 461 (AG) and D466. 2 required for formation of a 5-methylcytosine-binding pocket regions span residues 463 to 466 (YEDD) and 475 to 478 (YTGS). S511 is subject to Phosphoserine. K542 carries the post-translational modification N6-acetyllysine; alternate. K542 is covalently cross-linked (Glycyl lysine isopeptide (Lys-Gly) (interchain with G-Cter in SUMO2); alternate). Residues 616–657 (KNRKRPAKALEQGPSSSKIGKSKRKSTGPATTSPRVSKKSKL) are disordered. S631 bears the Phosphoserine; by CDK1 mark. S641 and S648 each carry phosphoserine. K656 participates in a covalent cross-link: Glycyl lysine isopeptide (Lys-Gly) (interchain with G-Cter in SUMO2). The RING-type zinc finger occupies 705–744 (CICCQELVFRPVTTVCQHNVCKDCLDRSFRAQVFSCPACR). S751 carries the post-translational modification Phosphoserine.

Interacts with DNMT3A and DNMT3B. Interacts with DNMT1; the interaction is direct. Interacts with USP7; leading to its deubiquitination. Interacts with histone H3. Interacts with HDAC1, but not with HDAC2. Interacts with BLTP3A. Interacts with PML. Interacts with EHMT2. Binds methylated CpG containing oligonucleotides. Interacts with ZNF263; recruited to the SIX3 promoter along with other proteins involved in chromatin modification and transcriptional corepression where it contributes to transcriptional repression. Interacts with UHRF2. Interacts with FANCD2. Interacts with TET1 isoform 2; this interaction induces the recruitment of TET1 isoform 2 to replicating heterochromatin. Phosphorylation at Ser-295 of the linker region decreases the binding to H3K9me3. Phosphorylation at Ser-631 by CDK1 during M phase impairs interaction with USP7, preventing deubiquitination and leading to degradation by the proteasome. In terms of processing, ubiquitinated; which leads to proteasomal degradation. Autoubiquitinated; interaction with USP7 leads to deubiquitination and prevents degradation. Ubiquitination and degradation takes place during M phase, when phosphorylation at Ser-631 prevents interaction with USP7 and subsequent deubiquitination. Polyubiquitination may be stimulated by DNA damage.

The protein resides in the nucleus. The catalysed reaction is S-ubiquitinyl-[E2 ubiquitin-conjugating enzyme]-L-cysteine + [acceptor protein]-L-lysine = [E2 ubiquitin-conjugating enzyme]-L-cysteine + N(6)-ubiquitinyl-[acceptor protein]-L-lysine.. It functions in the pathway protein modification; protein ubiquitination. Its function is as follows. Multidomain protein that acts as a key epigenetic regulator by bridging DNA methylation and chromatin modification. Specifically recognizes and binds hemimethylated DNA at replication forks via its YDG domain and recruits DNMT1 methyltransferase to ensure faithful propagation of the DNA methylation patterns through DNA replication. In addition to its role in maintenance of DNA methylation, also plays a key role in chromatin modification: through its tudor-like regions and PHD-type zinc fingers, specifically recognizes and binds histone H3 trimethylated at 'Lys-9' (H3K9me3) and unmethylated at 'Arg-2' (H3R2me0), respectively, and recruits chromatin proteins. Enriched in pericentric heterochromatin where it recruits different chromatin modifiers required for this chromatin replication. Also localizes to euchromatic regions where it negatively regulates transcription possibly by impacting DNA methylation and histone modifications. Has E3 ubiquitin-protein ligase activity by mediating the ubiquitination of target proteins such as histone H3 and PML. It is still unclear how E3 ubiquitin-protein ligase activity is related to its role in chromatin in vivo. Plays a role in DNA repair by cooperating with UHRF2 to ensure recruitment of FANCD2 to interstrand cross-links (ICLs) leading to FANCD2 activation. Plays a pivotal role in the establishment of correct spindle architecture by catalyzing the 'Lys-63'-linked ubiquitination of KIF11, thereby controlling KIF11 localization on the spindle. In Rattus norvegicus (Rat), this protein is E3 ubiquitin-protein ligase UHRF1 (Uhrf1).